The chain runs to 456 residues: UDP-N-acetylmuramate--L-alanine ligase (456 aa).

114-120 is a binding site for ATP; the sequence is GTHGKTT.

It belongs to the MurCDEF family.

The protein localises to the cytoplasm. It catalyses the reaction UDP-N-acetyl-alpha-D-muramate + L-alanine + ATP = UDP-N-acetyl-alpha-D-muramoyl-L-alanine + ADP + phosphate + H(+). Its pathway is cell wall biogenesis; peptidoglycan biosynthesis. In terms of biological role, cell wall formation. This chain is UDP-N-acetylmuramate--L-alanine ligase, found in Porphyromonas gingivalis (strain ATCC 33277 / DSM 20709 / CIP 103683 / JCM 12257 / NCTC 11834 / 2561).